Reading from the N-terminus, the 71-residue chain is Large ribosomal subunit protein bL31 (71 aa).

Residues Cys-16, Cys-18, Cys-37, and Cys-40 each coordinate Zn(2+).

The protein belongs to the bacterial ribosomal protein bL31 family. Type A subfamily. As to quaternary structure, part of the 50S ribosomal subunit. It depends on Zn(2+) as a cofactor.

Functionally, binds the 23S rRNA. This is Large ribosomal subunit protein bL31 from Pseudomonas putida (strain W619).